The sequence spans 261 residues: 14-3-3-like protein GF14-12 (261 aa).

Belongs to the 14-3-3 family.

Functionally, is associated with a DNA binding complex to bind to the G box, a well-characterized cis-acting DNA regulatory element found in plant genes. This is 14-3-3-like protein GF14-12 (GRF2) from Zea mays (Maize).